A 356-amino-acid chain; its full sequence is Tyrosine recombinase XerS (356 aa).

The region spanning leucine 16–threonine 121 is the Core-binding (CB) domain. One can recognise a Tyr recombinase domain in the interval lysine 169 to aspartate 354. Active-site residues include arginine 210, lysine 234, histidine 306, arginine 309, and histidine 332. Residue tyrosine 341 is the O-(3'-phospho-DNA)-tyrosine intermediate of the active site.

This sequence belongs to the 'phage' integrase family. XerS subfamily.

It is found in the cytoplasm. FtsK is required for recombination. Its function is as follows. Site-specific tyrosine recombinase, which acts by catalyzing the cutting and rejoining of the recombining DNA molecules. Essential to convert dimers of the bacterial chromosome into monomers to permit their segregation at cell division. The protein is Tyrosine recombinase XerS of Streptococcus thermophilus (strain ATCC BAA-491 / LMD-9).